Reading from the N-terminus, the 192-residue chain is Potassium-transporting ATPase KdpC subunit (192 aa).

A helical membrane pass occupies residues 14–34; sequence LTGVLVVLCGLIYPAMVTGIA.

This sequence belongs to the KdpC family. In terms of assembly, the system is composed of three essential subunits: KdpA, KdpB and KdpC.

The protein resides in the cell membrane. Its function is as follows. Part of the high-affinity ATP-driven potassium transport (or Kdp) system, which catalyzes the hydrolysis of ATP coupled with the electrogenic transport of potassium into the cytoplasm. This subunit acts as a catalytic chaperone that increases the ATP-binding affinity of the ATP-hydrolyzing subunit KdpB by the formation of a transient KdpB/KdpC/ATP ternary complex. This chain is Potassium-transporting ATPase KdpC subunit, found in Bacillus cytotoxicus (strain DSM 22905 / CIP 110041 / 391-98 / NVH 391-98).